Here is a 92-residue protein sequence, read N- to C-terminus: Small ribosomal subunit protein uS19 (92 aa).

Belongs to the universal ribosomal protein uS19 family.

Its function is as follows. Protein S19 forms a complex with S13 that binds strongly to the 16S ribosomal RNA. This chain is Small ribosomal subunit protein uS19, found in Paracidovorax citrulli (strain AAC00-1) (Acidovorax citrulli).